Here is a 297-residue protein sequence, read N- to C-terminus: Probable terminal-alkyne amino-acid exporter (297 aa).

9 helical membrane-spanning segments follow: residues 6–26 (AVWA…AIRV), 32–52 (GVAG…AIAA), 65–85 (LPMI…LLNW), 95–115 (ASLL…VFLG), 123–143 (IAGS…GGHA), 150–170 (WVVL…KPLL), 178–198 (VACY…PAMV), 212–232 (TVYL…YAVA), and 249–269 (VALV…ALVG). EamA domains lie at 6 to 137 (AVWA…AVIA) and 150 to 281 (WVVL…MLIN).

The protein belongs to the EamA transporter family.

It localises to the cell membrane. Probably involved in the export of terminal alkyne-containing amino acids, namely L-propargylglycine (Pra) and L-beta-ethynylserine, that are antibiotics synthesized by enzymes encoded in the same gene cluster. The sequence is that of Probable terminal-alkyne amino-acid exporter from Streptantibioticus cattleyicolor (strain ATCC 35852 / DSM 46488 / JCM 4925 / NBRC 14057 / NRRL 8057) (Streptomyces cattleya).